Reading from the N-terminus, the 267-residue chain is Phosphatidylserine decarboxylase proenzyme (267 aa).

Active-site charge relay system; for autoendoproteolytic cleavage activity residues include Asp-78, His-132, and Ser-236. Residue Ser-236 is the Schiff-base intermediate with substrate; via pyruvic acid; for decarboxylase activity of the active site. Residue Ser-236 is modified to Pyruvic acid (Ser); by autocatalysis.

It belongs to the phosphatidylserine decarboxylase family. PSD-B subfamily. Prokaryotic type I sub-subfamily. As to quaternary structure, heterodimer of a large membrane-associated beta subunit and a small pyruvoyl-containing alpha subunit. Pyruvate is required as a cofactor. In terms of processing, is synthesized initially as an inactive proenzyme. Formation of the active enzyme involves a self-maturation process in which the active site pyruvoyl group is generated from an internal serine residue via an autocatalytic post-translational modification. Two non-identical subunits are generated from the proenzyme in this reaction, and the pyruvate is formed at the N-terminus of the alpha chain, which is derived from the carboxyl end of the proenzyme. The autoendoproteolytic cleavage occurs by a canonical serine protease mechanism, in which the side chain hydroxyl group of the serine supplies its oxygen atom to form the C-terminus of the beta chain, while the remainder of the serine residue undergoes an oxidative deamination to produce ammonia and the pyruvoyl prosthetic group on the alpha chain. During this reaction, the Ser that is part of the protease active site of the proenzyme becomes the pyruvoyl prosthetic group, which constitutes an essential element of the active site of the mature decarboxylase.

It is found in the cell membrane. The catalysed reaction is a 1,2-diacyl-sn-glycero-3-phospho-L-serine + H(+) = a 1,2-diacyl-sn-glycero-3-phosphoethanolamine + CO2. It functions in the pathway phospholipid metabolism; phosphatidylethanolamine biosynthesis; phosphatidylethanolamine from CDP-diacylglycerol: step 2/2. Functionally, catalyzes the formation of phosphatidylethanolamine (PtdEtn) from phosphatidylserine (PtdSer). This Helicobacter pylori (strain J99 / ATCC 700824) (Campylobacter pylori J99) protein is Phosphatidylserine decarboxylase proenzyme.